A 376-amino-acid polypeptide reads, in one-letter code: Galactoside alpha-(1,2)-fucosyltransferase 1 (376 aa).

At Met1–Ala12 the chain is on the cytoplasmic side. Residues Phe13–Asn29 traverse the membrane as a helical; Signal-anchor for type II membrane protein segment. At Gly30–Ala376 the chain is on the lumenal side. Asn64, Asn302, and Asn328 each carry an N-linked (GlcNAc...) asparagine glycan.

Belongs to the glycosyltransferase 11 family.

Its subcellular location is the golgi apparatus. The protein localises to the golgi stack membrane. The enzyme catalyses a beta-D-galactosyl-(1-&gt;4)-N-acetyl-beta-D-glucosaminyl derivative + GDP-beta-L-fucose = an alpha-L-Fuc-(1-&gt;2)-beta-D-Gal-(1-&gt;4)-beta-D-GlcNAc derivative + GDP + H(+). It catalyses the reaction a ganglioside GA1 + GDP-beta-L-fucose = a ganglioside Fuc-GA1 + GDP + H(+). It carries out the reaction a beta-D-Gal-(1-&gt;3)-beta-D-GlcNAc-(1-&gt;3)-beta-D-Gal-(1-&gt;4)-beta-D-Glc-(1&lt;-&gt;1')-Cer(d18:1(4E)) + GDP-beta-L-fucose = alpha-L-fucosyl-(1-&gt;2)- beta-D-galactosyl-(1-&gt;3)-N-acetyl-beta-D-glucosaminyl-(1-&gt;3)-beta-D-galactosyl-(1-&gt;4)-beta-D-glucosyl-(1&lt;-&gt;1')-N-acylsphing-4-enine + GDP + H(+). The catalysed reaction is a neolactoside nLc4Cer(d18:1(4E)) + GDP-beta-L-fucose = a neolactoside IV(2)-alpha-Fuc-nLc4Cer(d18:1(4E)) + GDP + H(+). The enzyme catalyses a ganglioside GM1 + GDP-beta-L-fucose = a ganglioside Fuc-GM1 + GDP + H(+). It catalyses the reaction beta-D-galactosyl-(1-&gt;3)-N-acetyl-D-galactosamine + GDP-beta-L-fucose = alpha-L-fucosyl-(1-&gt;2)-beta-D-galactosyl-(1-&gt;3)-N-acetyl-D-galactosamine + GDP + H(+). It functions in the pathway protein modification; protein glycosylation. Its function is as follows. Catalyzes the transfer of L-fucose, from a guanosine diphosphate-beta-L-fucose, to the terminal galactose residue of glycoconjugates through an alpha(1,2) linkage leading to H antigen synthesis that is an intermediate substrate in the synthesis of ABO blood group antigens. H antigen is essential for maturation of the glomerular layer of the main olfactory bulb, in cell migration and early cell-cell contacts during tumor associated angiogenesis. Preferentially fucosylates soluble lactose and to a lesser extent fucosylates glycolipids gangliosides GA1 and GM1a. In Rattus norvegicus (Rat), this protein is Galactoside alpha-(1,2)-fucosyltransferase 1.